A 60-amino-acid chain; its full sequence is Large ribosomal subunit protein uL30 (60 aa).

The protein belongs to the universal ribosomal protein uL30 family. As to quaternary structure, part of the 50S ribosomal subunit.

In Shewanella denitrificans (strain OS217 / ATCC BAA-1090 / DSM 15013), this protein is Large ribosomal subunit protein uL30.